The chain runs to 53 residues: UPF0391 membrane protein msr4317 (53 aa).

Transmembrane regions (helical) follow at residues 4-24 and 33-53; these read WIII…PALA and ILIG…FAVT.

It belongs to the UPF0391 family.

The protein localises to the cell membrane. In Mesorhizobium japonicum (strain LMG 29417 / CECT 9101 / MAFF 303099) (Mesorhizobium loti (strain MAFF 303099)), this protein is UPF0391 membrane protein msr4317.